Here is a 249-residue protein sequence, read N- to C-terminus: Methylthioribulose-1-phosphate dehydratase (249 aa).

Cysteine 102 contacts substrate. 2 residues coordinate Zn(2+): histidine 120 and histidine 122. The active-site Proton donor/acceptor is glutamate 148. Histidine 205 is a Zn(2+) binding site.

This sequence belongs to the aldolase class II family. MtnB subfamily. The cofactor is Zn(2+).

Its subcellular location is the cytoplasm. It carries out the reaction 5-(methylsulfanyl)-D-ribulose 1-phosphate = 5-methylsulfanyl-2,3-dioxopentyl phosphate + H2O. The protein operates within amino-acid biosynthesis; L-methionine biosynthesis via salvage pathway; L-methionine from S-methyl-5-thio-alpha-D-ribose 1-phosphate: step 2/6. Its function is as follows. Catalyzes the dehydration of methylthioribulose-1-phosphate (MTRu-1-P) into 2,3-diketo-5-methylthiopentyl-1-phosphate (DK-MTP-1-P). This is Methylthioribulose-1-phosphate dehydratase from Botryotinia fuckeliana (strain B05.10) (Noble rot fungus).